The following is a 314-amino-acid chain: Olfactory receptor 5D13 (314 aa).

The Extracellular portion of the chain corresponds to 1–27 (MMASERNQSSTPTFILLGFSEYPEIQV). N7 carries N-linked (GlcNAc...) asparagine glycosylation. A helical membrane pass occupies residues 28–48 (PLFLVFLFVYTVTVVGNLGMI). Over 49-56 (IIIRLNSK) the chain is Cytoplasmic. Residues 57 to 77 (LHTIMCFFLSHLSLTDFCFST) traverse the membrane as a helical segment. At 78 to 101 (VVTPKLLENLVVEYRTISFSGCIM) the chain is on the extracellular side. A helical membrane pass occupies residues 102–122 (QFCFACIFGVTETFMLAAMAY). Over 123-141 (DRFVAVCKPLLYTTIMSQK) the chain is Cytoplasmic. A helical membrane pass occupies residues 142 to 162 (LCALLVAGSYTWGIVCSLILT). At 163–198 (YFLLDLSFCESTFINNFICDHSVIVSASYSDPYISQ) the chain is on the extracellular side. Residues 199 to 219 (RLCFIIAIFNEVSSLIIILTS) traverse the membrane as a helical segment. Residues 220–239 (YMLIFTTIMKMRSASGRQKT) are Cytoplasmic-facing. Residues 240 to 260 (FSTCASHLTAITIFHGTILFL) traverse the membrane as a helical segment. At 261 to 273 (YCVPNPKTSSLIV) the chain is on the extracellular side. The helical transmembrane segment at 274-294 (TVASVFYTVAIPMLNPLIYSL) threads the bilayer. Residues 295 to 314 (RNKDINNMFEKLVVTKLIYH) are Cytoplasmic-facing.

It belongs to the G-protein coupled receptor 1 family.

It localises to the cell membrane. Its function is as follows. Odorant receptor. The chain is Olfactory receptor 5D13 (OR5D13) from Homo sapiens (Human).